The following is a 604-amino-acid chain: Glutamine--fructose-6-phosphate aminotransferase [isomerizing] (604 aa).

The active-site Nucleophile; for GATase activity is Cys-2. The Glutamine amidotransferase type-2 domain maps to 2–219 (CGIMGAVSER…EGDSACVTTQ (218 aa)). 2 consecutive SIS domains span residues 279 to 427 (LRAS…DNRA) and 454 to 594 (LASL…VDQP). Lys-599 serves as the catalytic For Fru-6P isomerization activity.

Homodimer.

It is found in the cytoplasm. The catalysed reaction is D-fructose 6-phosphate + L-glutamine = D-glucosamine 6-phosphate + L-glutamate. Catalyzes the first step in hexosamine metabolism, converting fructose-6P into glucosamine-6P using glutamine as a nitrogen source. The sequence is that of Glutamine--fructose-6-phosphate aminotransferase [isomerizing] from Legionella pneumophila (strain Paris).